The sequence spans 104 residues: Co-chaperonin GroES (104 aa).

The protein belongs to the GroES chaperonin family. Heptamer of 7 subunits arranged in a ring. Interacts with the chaperonin GroEL.

It is found in the cytoplasm. Together with the chaperonin GroEL, plays an essential role in assisting protein folding. The GroEL-GroES system forms a nano-cage that allows encapsulation of the non-native substrate proteins and provides a physical environment optimized to promote and accelerate protein folding. GroES binds to the apical surface of the GroEL ring, thereby capping the opening of the GroEL channel. This chain is Co-chaperonin GroES, found in Acidiphilium cryptum (strain JF-5).